A 240-amino-acid polypeptide reads, in one-letter code: UDP-2,3-diacylglucosamine hydrolase (240 aa).

5 residues coordinate Mn(2+): aspartate 8, histidine 10, aspartate 41, asparagine 79, and histidine 114. 79–80 (NR) serves as a coordination point for substrate. Substrate is bound by residues aspartate 122, serine 160, threonine 164, lysine 167, and histidine 195. Mn(2+) contacts are provided by histidine 195 and histidine 197.

It belongs to the LpxH family. Mn(2+) is required as a cofactor.

It is found in the cell inner membrane. The catalysed reaction is UDP-2-N,3-O-bis[(3R)-3-hydroxytetradecanoyl]-alpha-D-glucosamine + H2O = 2-N,3-O-bis[(3R)-3-hydroxytetradecanoyl]-alpha-D-glucosaminyl 1-phosphate + UMP + 2 H(+). It functions in the pathway glycolipid biosynthesis; lipid IV(A) biosynthesis; lipid IV(A) from (3R)-3-hydroxytetradecanoyl-[acyl-carrier-protein] and UDP-N-acetyl-alpha-D-glucosamine: step 4/6. Its function is as follows. Hydrolyzes the pyrophosphate bond of UDP-2,3-diacylglucosamine to yield 2,3-diacylglucosamine 1-phosphate (lipid X) and UMP by catalyzing the attack of water at the alpha-P atom. Involved in the biosynthesis of lipid A, a phosphorylated glycolipid that anchors the lipopolysaccharide to the outer membrane of the cell. In Pseudomonas paraeruginosa (strain DSM 24068 / PA7) (Pseudomonas aeruginosa (strain PA7)), this protein is UDP-2,3-diacylglucosamine hydrolase.